A 194-amino-acid polypeptide reads, in one-letter code: Adenylate kinase isoenzyme 1 (194 aa).

An N-acetylmethionine modification is found at Met1. 18-23 (GSGKGT) contacts ATP. Ser38 is subject to Phosphoserine. The segment at 38–67 (STGDLLRAEVSSGSSRGKMLSSIMEKGELV) is NMP. AMP is bound by residues Thr39, Arg44, 65–67 (ELV), 94–97 (GYPR), and Gln101. The tract at residues 131–141 (KRGETSGRVDD) is LID. Arg132 lines the ATP pocket. AMP-binding residues include Arg138 and Arg149. Gly177 is a binding site for ATP.

The protein belongs to the adenylate kinase family. AK1 subfamily. As to quaternary structure, monomer. Mg(2+) serves as cofactor.

The protein localises to the cytoplasm. It catalyses the reaction a ribonucleoside 5'-phosphate + ATP = a ribonucleoside 5'-diphosphate + ADP. The catalysed reaction is AMP + ATP = 2 ADP. It carries out the reaction dAMP + ATP = dADP + ADP. The enzyme catalyses dATP + AMP = dADP + ADP. It catalyses the reaction dAMP + dATP = 2 dADP. The catalysed reaction is a 2'-deoxyribonucleoside 5'-diphosphate + ATP = a 2'-deoxyribonucleoside 5'-triphosphate + ADP. It carries out the reaction a ribonucleoside 5'-diphosphate + ATP = a ribonucleoside 5'-triphosphate + ADP. The enzyme catalyses CDP + GTP = CTP + GDP. It catalyses the reaction GDP + ATP = GTP + ADP. The catalysed reaction is UDP + ATP = UTP + ADP. It carries out the reaction GTP + UDP = UTP + GDP. The enzyme catalyses dTDP + GTP = dTTP + GDP. It catalyses the reaction dCDP + GTP = dCTP + GDP. The catalysed reaction is dGDP + ATP = dGTP + ADP. It carries out the reaction dADP + GTP = dATP + GDP. The enzyme catalyses thiamine diphosphate + ADP = thiamine triphosphate + AMP. Its function is as follows. Catalyzes the reversible transfer of the terminal phosphate group between ATP and AMP. Also displays broad nucleoside diphosphate kinase activity. Plays an important role in cellular energy homeostasis and in adenine nucleotide metabolism. Also catalyzes at a very low rate the synthesis of thiamine triphosphate (ThTP) from thiamine diphosphate (ThDP) and ADP. This Rattus norvegicus (Rat) protein is Adenylate kinase isoenzyme 1 (Ak1).